The sequence spans 50 residues: Protein HokA (50 aa).

Residues 7 to 24 (LLSLIVICFTLLFFTWMI) traverse the membrane as a helical segment.

It belongs to the Hok/Gef family.

The protein resides in the cell inner membrane. In terms of biological role, toxic component of a type I toxin-antitoxin (TA) system. When overexpressed kills cells within minutes; causes collapse of the transmembrane potential and arrest of respiration. Its toxic effect is probably neutralized by antisense antitoxin RNA SokA. The polypeptide is Protein HokA (Escherichia coli (strain K12)).